Here is a 231-residue protein sequence, read N- to C-terminus: Small ribosomal subunit protein uS3 (231 aa).

Positions 39–107 constitute a KH type-2 domain; that stretch reads IRKFLKAKLY…DVTINIKEER (69 aa).

This sequence belongs to the universal ribosomal protein uS3 family. Part of the 30S ribosomal subunit. Forms a tight complex with proteins S10 and S14.

Its function is as follows. Binds the lower part of the 30S subunit head. Binds mRNA in the 70S ribosome, positioning it for translation. The chain is Small ribosomal subunit protein uS3 from Campylobacter hominis (strain ATCC BAA-381 / DSM 21671 / CCUG 45161 / LMG 19568 / NCTC 13146 / CH001A).